The chain runs to 493 residues: Transcript termination protein OPG145 (493 aa).

In terms of domain architecture, Helicase ATP-binding spans 100 to 256; sequence MIESKRPLYI…NSIINIAKLS (157 aa). 113 to 120 is a binding site for ATP; sequence LACGFGKT. Residues 206–209 carry the DESH box motif; the sequence is DESH. One can recognise a Helicase C-terminal domain in the interval 309–456; the sequence is ILDTLVEEFK…IISLSVDKLG (148 aa).

Belongs to the helicase family. Poxviruses subfamily. As to quaternary structure, interacts with OPG087. Might be part of a transcription complex composed at least of OPG087, OPG110, and OPG145.

It localises to the virion. DNA helicase which seems to act as a postreplicative transcription termination factor. Involved in ATP-dependent release of nascent RNA. Forms a stable complex with single-stranded DNA, and to a lesser extent RNA. This Homo sapiens (Human) protein is Transcript termination protein OPG145 (OPG145).